The primary structure comprises 204 residues: Prephenate decarboxylase (204 aa).

This sequence belongs to the prephenate decarboxylase family.

It is found in the cytoplasm. The enzyme catalyses prephenate + H(+) = 3-[(4R)-4-hydroxycyclohexa-1,5-dien-1-yl]-2-oxopropanoate + CO2. It participates in antibiotic biosynthesis; bacilysin biosynthesis. Part of the bacABCDEF operon responsible for the biosynthesis of the nonribosomally synthesized dipeptide antibiotic bacilysin, composed of L-alanine and L-anticapsin. Bacilysin is an irreversible inactivator of the glutaminase domain of glucosamine synthetase. BacA is an unusual prephenate decarboxylase that avoids the typical aromatization of the cyclohexadienol ring of prephenate. BacA catalyzes the protonation of prephenate (1-carboxy-4-hydroxy-alpha-oxo-2,5-cyclohexadiene-1-propanoic acid) at C6 position, followed by a decarboxylation to produce the endocyclic-delta(4),delta(8)-7R-dihydro-hydroxyphenylpyruvate (en-H2HPP). En-H2HPP is able to undergo a slow nonenzymatic isomerization to produce the exocyclic-delta(3),delta(5)-dihydro-hydroxyphenylpyruvate (ex-H2HPP). BacA isomerizes only the pro-R double bond in prephenate. This chain is Prephenate decarboxylase, found in Bacillus amyloliquefaciens (Bacillus velezensis).